The chain runs to 196 residues: Nucleoside triphosphate pyrophosphatase (196 aa).

Residue D73 is the Proton acceptor of the active site.

The protein belongs to the Maf family. A divalent metal cation is required as a cofactor.

It is found in the cytoplasm. It catalyses the reaction a ribonucleoside 5'-triphosphate + H2O = a ribonucleoside 5'-phosphate + diphosphate + H(+). It carries out the reaction a 2'-deoxyribonucleoside 5'-triphosphate + H2O = a 2'-deoxyribonucleoside 5'-phosphate + diphosphate + H(+). Functionally, nucleoside triphosphate pyrophosphatase. May have a dual role in cell division arrest and in preventing the incorporation of modified nucleotides into cellular nucleic acids. The polypeptide is Nucleoside triphosphate pyrophosphatase (Chlamydia pneumoniae (Chlamydophila pneumoniae)).